The primary structure comprises 87 residues: Small ribosomal subunit protein bS20 (87 aa).

Residues 1 to 11 (MANIKSAKKRA) are compositionally biased toward basic residues. Residues 1–27 (MANIKSAKKRAVQSEKRRQHNASQRSM) form a disordered region.

The protein belongs to the bacterial ribosomal protein bS20 family.

Binds directly to 16S ribosomal RNA. The protein is Small ribosomal subunit protein bS20 of Haemophilus influenzae (strain PittEE).